The primary structure comprises 407 residues: Na(+)-translocating NADH-quinone reductase subunit F (407 aa).

The helical transmembrane segment at 4–24 (IILGVFFFTAIVVALVFVILG) threads the bilayer. The 93-residue stretch at 33-125 (GNVEVLINGE…NMKIHVHEEV (93 aa)) folds into the 2Fe-2S ferredoxin-type domain. 4 residues coordinate [2Fe-2S] cluster: Cys-68, Cys-74, Cys-77, and Cys-109. In terms of domain architecture, FAD-binding FR-type spans 128 to 269 (VKKWECTVRS…SGPFGEFFAR (142 aa)).

The protein belongs to the NqrF family. Composed of six subunits; NqrA, NqrB, NqrC, NqrD, NqrE and NqrF. Requires [2Fe-2S] cluster as cofactor. It depends on FAD as a cofactor.

The protein localises to the cell inner membrane. It catalyses the reaction a ubiquinone + n Na(+)(in) + NADH + H(+) = a ubiquinol + n Na(+)(out) + NAD(+). In terms of biological role, NQR complex catalyzes the reduction of ubiquinone-1 to ubiquinol by two successive reactions, coupled with the transport of Na(+) ions from the cytoplasm to the periplasm. The first step is catalyzed by NqrF, which accepts electrons from NADH and reduces ubiquinone-1 to ubisemiquinone by a one-electron transfer pathway. The protein is Na(+)-translocating NADH-quinone reductase subunit F of Methylococcus capsulatus (strain ATCC 33009 / NCIMB 11132 / Bath).